A 212-amino-acid polypeptide reads, in one-letter code: MHEPRAVVVVHRDVWAYQQAWEQQLAWVQAIHEGQRQDTLILLEHMPVYTLGKRATRADVLRQDIPAVYTDRGGQVTYHGPGQLVVYVLWNLRGQLHGVRAHVARLEEMVMEVLAHYGVVGQRDGAGPGIWVGDAKIASIGVRVTQGVTLHGLSLNRDPDLSHFQGIIPCGQVGRPVTSLAALGVAVSRQALEQRMVEAFERQFNARCWEAS.

One can recognise a BPL/LPL catalytic domain in the interval 34 to 208; the sequence is GQRQDTLILL…AFERQFNARC (175 aa). Residues 72–79, 139–141, and 152–154 each bind substrate; these read RGGQVTYH, SIG, and GLS. The Acyl-thioester intermediate role is filled by Cys170.

It belongs to the LipB family.

It localises to the cytoplasm. It carries out the reaction octanoyl-[ACP] + L-lysyl-[protein] = N(6)-octanoyl-L-lysyl-[protein] + holo-[ACP] + H(+). It participates in protein modification; protein lipoylation via endogenous pathway; protein N(6)-(lipoyl)lysine from octanoyl-[acyl-carrier-protein]: step 1/2. Its function is as follows. Catalyzes the transfer of endogenously produced octanoic acid from octanoyl-acyl-carrier-protein onto the lipoyl domains of lipoate-dependent enzymes. Lipoyl-ACP can also act as a substrate although octanoyl-ACP is likely to be the physiological substrate. The chain is Octanoyltransferase from Magnetococcus marinus (strain ATCC BAA-1437 / JCM 17883 / MC-1).